The sequence spans 115 residues: Basic leucine zipper transcriptional factor ATF-like (115 aa).

Residues 1-57 (MQQEPDRNEQGYCSSPPSSNKQDSSDDTKKIQRREKNRIAAQKSRQRQTQKADSLHI) form a disordered region. The bZIP domain occupies 27-90 (DTKKIQRREK…KYLTCVLSTH (64 aa)). Positions 29 to 51 (KKIQRREKNRIAAQKSRQRQTQK) are basic motif. Residues 55-83 (LHIESENLERLNSALRGEISGLREELKYL) form a leucine-zipper region.

The protein belongs to the bZIP family.

It localises to the nucleus. Its subcellular location is the cytoplasm. AP-1 family transcription factor that controls the differentiation of lineage-specific cells in the immune system: specifically mediates the differentiation of T-helper 17 cells (Th17), follicular T-helper cells (TfH), CD8(+) dendritic cells and class-switch recombination (CSR) in B-cells. The sequence is that of Basic leucine zipper transcriptional factor ATF-like (batf) from Xenopus tropicalis (Western clawed frog).